The sequence spans 468 residues: Effector protein hopD2 (468 aa).

Over residues 1 to 20 (MNPLQPIQHSITNSQMSGGQ) the composition is skewed to polar residues. Residues 1 to 35 (MNPLQPIQHSITNSQMSGGQQLEAEGSQAHNSYSH) are disordered. In terms of domain architecture, Tyrosine-protein phosphatase spans 143–468 (DASSPPSAND…TQWRAKIALE (326 aa)). The active-site Phosphocysteine intermediate is the Cys-378.

As to quaternary structure, interacts with EFR and FLS2 (via the kinase and cytoplasmic domains).

It is found in the secreted. It catalyses the reaction O-phospho-L-tyrosyl-[protein] + H2O = L-tyrosyl-[protein] + phosphate. Its activity is regulated as follows. Inhibited by sodium orthovanadate. Effector showing tyrosine-phosphatase activity required for host defense suppression. Functions inside plant cells causing suppression of HR (hypersensitive response), PR1 gene expression and oxidative burst probably by interfering with a MAPK (mitogen-activated protein kinase) pathway. MAPK cascades are known to activate defense-related transcription factors. Inhibits plant pattern-recognition receptors (PRRs) activation. In Pseudomonas syringae pv. tomato (strain ATCC BAA-871 / DC3000), this protein is Effector protein hopD2 (hopD2).